A 554-amino-acid chain; its full sequence is Hydroxylamine reductase (554 aa).

Residues Cys-3, Cys-6, Cys-18, and Cys-25 each contribute to the [2Fe-2S] cluster site. Hybrid [4Fe-2O-2S] cluster is bound by residues His-252, Glu-276, Cys-320, Cys-408, Cys-436, Cys-461, Glu-495, and Lys-497. Cys-408 bears the Cysteine persulfide mark.

This sequence belongs to the HCP family. [2Fe-2S] cluster is required as a cofactor. It depends on hybrid [4Fe-2O-2S] cluster as a cofactor.

The protein localises to the cytoplasm. It carries out the reaction A + NH4(+) + H2O = hydroxylamine + AH2 + H(+). Catalyzes the reduction of hydroxylamine to form NH(3) and H(2)O. The chain is Hydroxylamine reductase from Shewanella oneidensis (strain ATCC 700550 / JCM 31522 / CIP 106686 / LMG 19005 / NCIMB 14063 / MR-1).